The sequence spans 335 residues: Mycobacterial beta-ketoacyl-[acyl-carrier-protein] synthase III (335 aa).

Catalysis depends on residues Cys-122 and His-258. Positions 259-263 (QANSR) are ACP-binding. The active site involves Asn-289.

Belongs to the thiolase-like superfamily. FabH family. As to quaternary structure, homodimer.

The protein resides in the cytoplasm. It carries out the reaction malonyl-[ACP] + dodecanoyl-CoA + H(+) = 3-oxotetradecanoyl-[ACP] + CO2 + CoA. Its pathway is lipid metabolism; fatty acid biosynthesis. It participates in lipid metabolism; mycolic acid biosynthesis. Functionally, catalyzes the condensation reaction of fatty acid synthesis by the addition to an acyl acceptor of two carbons from malonyl-ACP. Catalyzes the first condensation reaction which initiates fatty acid synthesis and may therefore play a role in governing the total rate of fatty acid production. Possesses both acetoacetyl-ACP synthase and acetyl transacylase activities. Its substrate specificity determines the biosynthesis of branched-chain and/or straight-chain of fatty acids. The chain is Mycobacterial beta-ketoacyl-[acyl-carrier-protein] synthase III from Mycobacterium avium (strain 104).